The chain runs to 311 residues: MDSPSGSLSPVAIDLAGVSKSYGGKIVVNDLSFTIAAGECFGLLGPNGAGKSTITRMILGMTSPSVGKITVLGAQEPGQVRLARAKIGIVSQFDNLDLEFTVRENLLVYGRYFRMSTREIETVIPSLLEFARLESKANTRVADLSGGMKRRLTLARALINDPQLLILDEPTTGLDPHARHLIWERLRSLLARGKTILLTTHIMEEAERLCDRLCVLEAGRKIAEGRPHALIEEQIGCPVIEIYGGDPQELSLLIRPNARRLEISGETLFCYTPDPEQVRAQLRAYSNLRLLERPPNLEDVFLRLTGREMEK.

Residues 13-243 enclose the ABC transporter domain; that stretch reads IDLAGVSKSY…QIGCPVIEIY (231 aa). 45 to 52 serves as a coordination point for ATP; the sequence is GPNGAGKS.

Belongs to the ABC transporter superfamily. Lipooligosaccharide exporter (TC 3.A.1.102) family. The complex is composed of two ATP-binding proteins (NodI) and two transmembrane proteins (NodJ).

The protein resides in the cell inner membrane. Part of the ABC transporter complex NodIJ involved in the export of the nodulation factors (Nod factors), the bacterial signal molecules that induce symbiosis and subsequent nodulation induction. Nod factors are LCO (lipo-chitin oligosaccharide), a modified beta-1,4-linked N-acetylglucosamine oligosaccharide. This subunit is responsible for energy coupling to the transport system. This chain is Nod factor export ATP-binding protein I, found in Rhizobium johnstonii (strain DSM 114642 / LMG 32736 / 3841) (Rhizobium leguminosarum bv. viciae).